The sequence spans 111 residues: Prostate and testis expressed protein 2 (111 aa).

The N-terminal stretch at 1–18 (MFVLVMICLFCQYWGVLN) is a signal peptide. The 82-residue stretch at 27–108 (LLCYKCKKYH…CKHSNYCNLP (82 aa)) folds into the UPAR/Ly6 domain. Cystine bridges form between Cys-29/Cys-55, Cys-32/Cys-40, Cys-47/Cys-78, and Cys-82/Cys-99.

Belongs to the PATE family. As to expression, expressed in prostate, testis, brain and lung.

The protein resides in the secreted. The sequence is that of Prostate and testis expressed protein 2 (Pate2) from Mus musculus (Mouse).